The sequence spans 527 residues: MLMLFVFGVLLHEVSLSGQNEAPPNTHSIPGEPLYNYASIRLPEEHIPFFLHNNRHIATVCRKDSLCPYKKHLEKLKYCWGYEKSCKPEFRFGYPVCSYVDMGWTDTLESAEDIFWKQADFGYARERLEEMHVLCQPKETSDSSLVCSRYLQYCRATNLYLDLRNIKRNHDRFMEDFFQSGEIGGHCKLDIRTLMSEGQRKSPLQSWFAELQSYTQLNFRPIEDAKCDIVIEKPTYFMKLDAGVNMYHHFCDFINLYITQHVNNSFSTDVYIVMWDTSSYGYGDLFSDTWNAFTDYDVIHLKTYDSKRVCFKEAVFSLLPRMRYGLFYNTPLISGCQNTGLFRAFAQHVLHRLNITQEGPKDGKIRVTILARSTEYRKILNQNELVNALKTVSTFEVQIVDYKYRELGFLDQLRITHNTDIFIGMHGAGLTHLLFLPDWAAVFELYNCEDERCYLDLARLRGVHYITWRRQNKVFPQDKGHHPTLGEHPKFTNYSFDVEEFMYLVLQAADHVLQHPKWPFKKKHDEL.

The first 17 residues, 1 to 17 (MLMLFVFGVLLHEVSLS), serve as a signal peptide directing secretion. A Required for optimal activity motif is present at residues 295–297 (DYD). A glycan (N-linked (GlcNAc...) asparagine) is linked at N354. A Prevents secretion from ER motif is present at residues 524–527 (HDEL).

It belongs to the glycosyltransferase 61 family.

Its subcellular location is the endoplasmic reticulum lumen. The catalysed reaction is L-seryl-[protein] + UDP-N-acetyl-alpha-D-glucosamine = 3-O-(N-acetyl-beta-D-glucosaminyl)-L-seryl-[protein] + UDP + H(+). It catalyses the reaction L-threonyl-[protein] + UDP-N-acetyl-alpha-D-glucosamine = 3-O-(N-acetyl-beta-D-glucosaminyl)-L-threonyl-[protein] + UDP + H(+). In terms of biological role, catalyzes the transfer of a single N-acetylglucosamine from UDP-GlcNAc to a serine or threonine residue in extracellular proteins resulting in their modification with a beta-linked N-acetylglucosamine (O-GlcNAc). Specifically glycosylates the Thr residue located between the fifth and sixth conserved cysteines of folded EGF-like domains. The protein is EGF domain-specific O-linked N-acetylglucosamine transferase (EOGT) of Pan troglodytes (Chimpanzee).